A 219-amino-acid chain; its full sequence is Trafficking protein particle complex subunit 4 (219 aa).

The protein belongs to the TRAPP small subunits family. TRAPPC4 subfamily. Component of the multisubunit TRAPP (transport protein particle) complex, which includes at least TRAPPC2, TRAPPC2L, TRAPPC3, TRAPPC3L, TRAPPC4, TRAPPC5, TRAPPC8, TRAPPC9, TRAPPC10, TRAPPC11 and TRAPPC12. Interacts with SDC2. In terms of tissue distribution, widely expressed.

It is found in the postsynaptic cell membrane. The protein localises to the golgi apparatus membrane. It localises to the endoplasmic reticulum. The protein resides in the vesicle. Core component of the TRAPP complexes which has a function of guanine nucleotide exchange factor activity for Rab1 GTPase. Plays a role in vesicular transport from endoplasmic reticulum to Golgi and autophagy. May play a role in dendrite postsynaptic membrane trafficking. This chain is Trafficking protein particle complex subunit 4, found in Mus musculus (Mouse).